The sequence spans 422 residues: Glutamate-1-semialdehyde 2,1-aminomutase (422 aa).

The residue at position 258 (Lys-258) is an N6-(pyridoxal phosphate)lysine.

The protein belongs to the class-III pyridoxal-phosphate-dependent aminotransferase family. HemL subfamily. In terms of assembly, homodimer. Pyridoxal 5'-phosphate is required as a cofactor.

It localises to the cytoplasm. It catalyses the reaction (S)-4-amino-5-oxopentanoate = 5-aminolevulinate. Its pathway is porphyrin-containing compound metabolism; protoporphyrin-IX biosynthesis; 5-aminolevulinate from L-glutamyl-tRNA(Glu): step 2/2. This is Glutamate-1-semialdehyde 2,1-aminomutase from Chlamydia trachomatis serovar L2 (strain ATCC VR-902B / DSM 19102 / 434/Bu).